The primary structure comprises 220 residues: Charged multivesicular body protein 2a (220 aa).

2 coiled-coil regions span residues 12–53 (EELL…MAKQ) and 198–219 (EATAALADADADLEERLNNLRR). The interval 196–220 (KGEATAALADADADLEERLNNLRRD) is disordered. The short motif at 208–218 (ADLEERLNNLR) is the MIT-interacting motif element. Over residues 211-220 (EERLNNLRRD) the composition is skewed to basic and acidic residues.

The protein belongs to the SNF7 family. As to quaternary structure, probable core component of the endosomal sorting required for transport complex III (ESCRT-III). ESCRT-III components are thought to multimerize to form a flat lattice on the perimeter membrane of the endosome.

It localises to the late endosome membrane. Its subcellular location is the cytoplasm. Its function is as follows. Probable core component of the endosomal sorting required for transport complex III (ESCRT-III) which is involved in multivesicular bodies (MVBs) formation and sorting of endosomal cargo proteins into MVBs. MVBs contain intraluminal vesicles (ILVs) that are generated by invagination and scission from the limiting membrane of the endosome and mostly are delivered to lysosomes enabling degradation of membrane proteins, such as stimulated growth factor receptors, lysosomal enzymes and lipids. This Xenopus laevis (African clawed frog) protein is Charged multivesicular body protein 2a (chmp2a).